Here is a 365-residue protein sequence, read N- to C-terminus: tRNA(Met) cytidine acetate ligase (365 aa).

Residues 7–20, Gly96, Asn152, and Arg175 each bind ATP; that span reads IAEFNPFHNGHKYL.

Belongs to the TmcAL family.

The protein localises to the cytoplasm. The catalysed reaction is cytidine(34) in elongator tRNA(Met) + acetate + ATP = N(4)-acetylcytidine(34) in elongator tRNA(Met) + AMP + diphosphate. Its function is as follows. Catalyzes the formation of N(4)-acetylcytidine (ac(4)C) at the wobble position of elongator tRNA(Met), using acetate and ATP as substrates. First activates an acetate ion to form acetyladenylate (Ac-AMP) and then transfers the acetyl group to tRNA to form ac(4)C34. The sequence is that of tRNA(Met) cytidine acetate ligase from Streptococcus pneumoniae (strain Taiwan19F-14).